A 438-amino-acid chain; its full sequence is Elongation factor 1-alpha (438 aa).

The 224-residue stretch at 5 to 228 (KPHLNLVVIG…ALDSLEPPPK (224 aa)) folds into the tr-type G domain. The tract at residues 14 to 21 (GHVDHGKS) is G1. 14-21 (GHVDHGKS) is a GTP binding site. Ser-21 contributes to the Mg(2+) binding site. The interval 70–74 (GVTIA) is G2. Residues 91–94 (DAPG) form a G3 region. GTP-binding positions include 91-95 (DAPGH) and 153-156 (NKMD). The interval 153–156 (NKMD) is G4. The segment at 194–196 (SAW) is G5.

Belongs to the TRAFAC class translation factor GTPase superfamily. Classic translation factor GTPase family. EF-Tu/EF-1A subfamily.

Its subcellular location is the cytoplasm. It carries out the reaction GTP + H2O = GDP + phosphate + H(+). Its function is as follows. GTP hydrolase that promotes the GTP-dependent binding of aminoacyl-tRNA to the A-site of ribosomes during protein biosynthesis. The chain is Elongation factor 1-alpha from Staphylothermus marinus (strain ATCC 43588 / DSM 3639 / JCM 9404 / F1).